The sequence spans 69 residues: Sperm protamine P1 (69 aa).

Basic residues-rich tracts occupy residues 1 to 30 (MARFRPSRSRSRSLYRRRRRSRRQRSRRGG) and 37 to 69 (KITRRGRGRGKSRRRRGRRSMRSSRRRRRRRRN). The tract at residues 1–69 (MARFRPSRSR…SRRRRRRRRN (69 aa)) is disordered.

This sequence belongs to the protamine P1 family. As to expression, testis.

The protein localises to the nucleus. It localises to the chromosome. Protamines substitute for histones in the chromatin of sperm during the haploid phase of spermatogenesis. They compact sperm DNA into a highly condensed, stable and inactive complex. This Tachyglossus aculeatus aculeatus (Southeast Australian short-beaked echidna) protein is Sperm protamine P1 (PRM1).